Reading from the N-terminus, the 214-residue chain is 3-isopropylmalate dehydratase small subunit (214 aa).

This sequence belongs to the LeuD family. LeuD type 1 subfamily. Heterodimer of LeuC and LeuD.

It carries out the reaction (2R,3S)-3-isopropylmalate = (2S)-2-isopropylmalate. Its pathway is amino-acid biosynthesis; L-leucine biosynthesis; L-leucine from 3-methyl-2-oxobutanoate: step 2/4. Its function is as follows. Catalyzes the isomerization between 2-isopropylmalate and 3-isopropylmalate, via the formation of 2-isopropylmaleate. This chain is 3-isopropylmalate dehydratase small subunit, found in Pseudomonas putida (strain ATCC 47054 / DSM 6125 / CFBP 8728 / NCIMB 11950 / KT2440).